Consider the following 394-residue polypeptide: MTRIETRTEPMVINMGPHHPSMHGVLRLIVTLDGEDVVDCEPVIGYLHRGMEKIAENRTNVMYVPYVSRWDYAAGMFNEAITVNAPEKLADIEVPKRAQYIRVIMLELNRIANHLLWLGPFLADVGAQTPFFYIFREREMIYDLWEAATGMRLINNNYFRIGGVAVDLPYGWNDKCLDFCDYFDPKVDEYEKLITNNPIFRRRVEGVGTITRDEAINWSLSGPMLRASGVKWDLRKVDHYECYDDFDWDVQWETAGDCFARYLVRIREMRESVKIIRQALKGMPGGAYENLEAKRMLEGKKSEWNDFDYQYIAKKVAPTFKIPDGEHYVRLESGKGEVGIFIQGNNNVFPWRWKIRSADFNNLQILPHLLKGVKVADIMAILGSIDVIMGSVDR.

Belongs to the complex I 49 kDa subunit family. In terms of assembly, NDH-1 can be composed of about 15 different subunits; different subcomplexes with different compositions have been identified which probably have different functions.

Its subcellular location is the cellular thylakoid membrane. It catalyses the reaction a plastoquinone + NADH + (n+1) H(+)(in) = a plastoquinol + NAD(+) + n H(+)(out). It carries out the reaction a plastoquinone + NADPH + (n+1) H(+)(in) = a plastoquinol + NADP(+) + n H(+)(out). Functionally, NDH-1 shuttles electrons from an unknown electron donor, via FMN and iron-sulfur (Fe-S) centers, to quinones in the respiratory and/or the photosynthetic chain. The immediate electron acceptor for the enzyme in this species is believed to be plastoquinone. Couples the redox reaction to proton translocation, and thus conserves the redox energy in a proton gradient. Cyanobacterial NDH-1 also plays a role in inorganic carbon-concentration. This chain is NAD(P)H-quinone oxidoreductase subunit H, found in Picosynechococcus sp. (strain ATCC 27264 / PCC 7002 / PR-6) (Agmenellum quadruplicatum).